Here is a 173-residue protein sequence, read N- to C-terminus: tRNA-specific adenosine deaminase (173 aa).

The 113-residue stretch at 9 to 121 folds into the CMP/dCMP-type deaminase domain; it reads EFDEKMMRYA…DYKTGAIGSR (113 aa). A Zn(2+)-binding site is contributed by His-61. The Proton donor role is filled by Glu-63. 2 residues coordinate Zn(2+): Cys-91 and Cys-94.

The protein belongs to the cytidine and deoxycytidylate deaminase family. As to quaternary structure, homodimer. It depends on Zn(2+) as a cofactor.

It catalyses the reaction adenosine(34) in tRNA + H2O + H(+) = inosine(34) in tRNA + NH4(+). Its function is as follows. Catalyzes the deamination of adenosine to inosine at the wobble position 34 of tRNA(Arg2). The polypeptide is tRNA-specific adenosine deaminase (Haemophilus influenzae (strain ATCC 51907 / DSM 11121 / KW20 / Rd)).